We begin with the raw amino-acid sequence, 444 residues long: Phosphoglucosamine mutase (444 aa).

S102 (phosphoserine intermediate) is an active-site residue. Mg(2+) contacts are provided by S102, D241, D243, and D245. S102 carries the phosphoserine modification.

Belongs to the phosphohexose mutase family. Mg(2+) is required as a cofactor. Post-translationally, activated by phosphorylation.

The enzyme catalyses alpha-D-glucosamine 1-phosphate = D-glucosamine 6-phosphate. Functionally, catalyzes the conversion of glucosamine-6-phosphate to glucosamine-1-phosphate. The sequence is that of Phosphoglucosamine mutase from Mannheimia succiniciproducens (strain KCTC 0769BP / MBEL55E).